The primary structure comprises 347 residues: Transcription factor JunD (347 aa).

The interval 1 to 46 (METPFYGDEALSGLGGGGSSSGGGGSFASPGRLFPGAPPTAAPGSM) is disordered. Gly residues predominate over residues 13-26 (GLGGGGSSSGGGGS). A Menin-binding motif (MBM) motif is present at residues 29 to 41 (SPGRLFPGAPPTA). Positions 48–57 (KKDALTLSLS) match the MAP kinase docking motif; essential for its phosphorylation motif. The tract at residues 63 to 91 (ALKPAAAPPPGPLRTDGAPGTAPPDGLLA) is disordered. S92 bears the Phosphoserine mark. A Phosphoserine; by MAPK8 modification is found at S102. T119 carries the post-translational modification Phosphothreonine. Disordered stretches follow at residues 164-183 (AAAG…SELA) and 218-264 (EPVP…IDMD). The segment covering 220 to 231 (VPFPPPPPPGTL) has biased composition (pro residues). Phosphoserine occurs at positions 251, 255, and 259. The segment at 268 to 295 (RIKAERKRLRNRIAASKCRKRKLERISR) is basic motif. Positions 268–331 (RIKAERKRLR…AQLKQKVLSH (64 aa)) constitute a bZIP domain. Positions 296 to 324 (LEEKVKTLKSQNTELASTASLLREQVAQL) are leucine-zipper.

Belongs to the bZIP family. Jun subfamily. Heterodimer; binds DNA as a heterodimer. Component of an AP-1 transcription factor complex composed of JUN-FOS heterodimers. As part of the AP-1 transcription factor complex, forms heterodimers with FOS proteins, thereby binding to the AP-1 consensus sequence and stimulating transcription. Forms heterodimers with FOSB; thereby binding to the AP-1 consensus sequence. Interacts (via MBM motif) with MEN1; this interaction represses transcriptional activation. Interacts with MAPK10; this interaction is inhibited in the presence of MEN1. In terms of processing, phosphorylated by MAP kinases MAPK8 and MAPK10; phosphorylation is inhibited in the presence of MEN1.

The protein localises to the nucleus. In terms of biological role, transcription factor binding AP-1 sites. Heterodimerizes with proteins of the FOS family to form an AP-1 transcription factor complex, thereby enhancing their DNA binding activity to an AP-1 consensus sequence 3'-TGA[GC]TCA-5' and enhancing their transcriptional activity. The protein is Transcription factor JunD (JUND) of Bos taurus (Bovine).